We begin with the raw amino-acid sequence, 353 residues long: O-antigen biosynthesis glycosyltransferase WclY (353 aa).

The chain crosses the membrane as a helical span at residues 116-136; it reads SLIWGLLWCSIWLFFDKLVIL. Residues N190 and E271 each coordinate UDP. Positions 263–271 match the E(x7)E glycosyltransferase motif motif; that stretch reads EGFGLTVLE.

Belongs to the glycosyltransferase group 1 family. Glycosyltransferase 4 subfamily.

It localises to the membrane. It participates in bacterial outer membrane biogenesis; LPS O-antigen biosynthesis. Functionally, involved in the assembly of the O-repeating unit during O-antigen biosynthesis. N-acetylglucosamine transferase accountable for the alpha-D-GlcNAc-1,4-beta-D-Gal linkage within the O-antigen. The chain is O-antigen biosynthesis glycosyltransferase WclY from Escherichia coli.